Consider the following 99-residue polypeptide: Single insulin-like growth factor-binding domain protein-2 (99 aa).

Residues 1–18 (MESLFIFAFGMMLSSASA) form the signal peptide. Residues 19–98 (LSCIPCVPEE…GQEVGRCRKK (80 aa)) enclose the IGFBP N-terminal domain. Ser-20 carries O-linked (GalNAc...) serine glycosylation. Disulfide bonds link Cys-21–Cys-44, Cys-24–Cys-46, Cys-29–Cys-47, Cys-35–Cys-50, Cys-58–Cys-74, and Cys-68–Cys-95.

In terms of tissue distribution, expressed in hemocytes.

The protein resides in the secreted. Its function is as follows. Has a role in the innate immune system. This Cupiennius salei (American wandering spider) protein is Single insulin-like growth factor-binding domain protein-2.